Consider the following 810-residue polypeptide: MSVIAQAGAKGRQLHKFGGSSLADVKCYLRVAGIMAEYSQPDDMMVVSAAGSTTNQLINWLKLSQTDRLSAHQVQQTLRRYQCDLISGLLPAEEADSLISAFVSDLERLAALLDSGINDAVYAEVVGHGEVWSARLMSAVLNQQGLPAAWLDAREFLRAERAAQPQVDEGLSYPLLQQLLVQHPGKRLVVTGFISRNNAGETVLLGRNGSDYSATQIGALAGVSRVTIWSDVAGVYSADPRKVKDACLLPLLRLDEASELARLAAPVLHARTLQPVSGSEIDLQLRCSYTPDQGSTRIERVLASGTGARIVTSHDDVCLIEFQVPASQDFKLAHKEIDQILKRAQVRPLAVGVHNDRQLLQFCYTSEVADSALKILDEAGLPGELRLRQGLALVAMVGAGVTRNPLHCHRFWQQLKGQPVEFTWQSDDGISLVAVLRTGPTESLIQGLHQSVFRAEKRIGLVLFGKGNIGSRWLELFAREQSTLSARTGFEFVLAGVVDSRRSLLSYDGLDASRALAFFNDEAVEQDEESLFLWMRAHPYDDLVVLDVTASQQLADQYLDFASHGFHVISANKLAGASDSNKYRQIHDAFEKTGRHWLYNATVGAGLPINHTVRDLIDSGDTILSISGIFSGTLSWLFLQFDGSVPFTELVDQAWQQGLTEPDPRDDLSGKDVMRKLVILAREAGYNIEPDQVRVESLVPAHCEGGSIDHFFENGDELNEQMVQRLEAAREMGLVLRYVARFDANGKARVGVEAVREDHPLASLLPCDNVFAIESRWYRDNPLVIRGPGAGRDVTAGAIQSDINRLAQLL.

The tract at residues 2-252 (SVIAQAGAKG…VKDACLLPLL (251 aa)) is aspartokinase. The interface stretch occupies residues 253–463 (RLDEASELAR…RAEKRIGLVL (211 aa)). The homoserine dehydrogenase stretch occupies residues 464–810 (FGKGNIGSRW…SDINRLAQLL (347 aa)). Positions 468 and 469 each coordinate NADP(+). NAD(+) is bound by residues Ile469 and Val498. Ile469 lines the NADPH pocket. NADP(+)-binding residues include Arg501, Thr549, and Lys573. NAD(+) is bound at residue Thr549. Residues Thr549 and Lys573 each contribute to the NADPH site. Na(+)-binding residues include Val603, Ala605, and Leu607. Residues Gly658 and Glu661 each contribute to the NADP(+) site. Glu661 and Asp672 together coordinate L-homoserine. Lys676 acts as the Proton donor in catalysis. Gly791 contacts NADP(+). Gly791 is an NAD(+) binding site. Gly791 is an NADPH binding site.

In the N-terminal section; belongs to the aspartokinase family. The protein in the C-terminal section; belongs to the homoserine dehydrogenase family. As to quaternary structure, homotetramer. It depends on a metal cation as a cofactor.

It catalyses the reaction L-homoserine + NADP(+) = L-aspartate 4-semialdehyde + NADPH + H(+). The catalysed reaction is L-homoserine + NAD(+) = L-aspartate 4-semialdehyde + NADH + H(+). It carries out the reaction L-aspartate + ATP = 4-phospho-L-aspartate + ADP. It participates in amino-acid biosynthesis; L-lysine biosynthesis via DAP pathway; (S)-tetrahydrodipicolinate from L-aspartate: step 1/4. The protein operates within amino-acid biosynthesis; L-methionine biosynthesis via de novo pathway; L-homoserine from L-aspartate: step 1/3. It functions in the pathway amino-acid biosynthesis; L-methionine biosynthesis via de novo pathway; L-homoserine from L-aspartate: step 3/3. Its pathway is amino-acid biosynthesis; L-threonine biosynthesis; L-threonine from L-aspartate: step 1/5. It participates in amino-acid biosynthesis; L-threonine biosynthesis; L-threonine from L-aspartate: step 3/5. In terms of biological role, bifunctional aspartate kinase and homoserine dehydrogenase that catalyzes the first and the third steps toward the synthesis of lysine, methionine and threonine from aspartate. The sequence is that of Bifunctional aspartokinase/homoserine dehydrogenase 2 (metL) from Escherichia coli (strain K12).